The following is a 210-amino-acid chain: Large ribosomal subunit protein uL4 (210 aa).

A compositionally biased stretch (polar residues) spans 41–52 (QTNARQGTASTK). Residues 41–71 (QTNARQGTASTKTRAEVRGGGRKPWRQKGTG) form a disordered region. A compositionally biased stretch (basic residues) spans 60–71 (GGRKPWRQKGTG).

It belongs to the universal ribosomal protein uL4 family. As to quaternary structure, part of the 50S ribosomal subunit.

Functionally, one of the primary rRNA binding proteins, this protein initially binds near the 5'-end of the 23S rRNA. It is important during the early stages of 50S assembly. It makes multiple contacts with different domains of the 23S rRNA in the assembled 50S subunit and ribosome. Forms part of the polypeptide exit tunnel. This chain is Large ribosomal subunit protein uL4, found in Trichormus variabilis (strain ATCC 29413 / PCC 7937) (Anabaena variabilis).